Reading from the N-terminus, the 462-residue chain is 3-ketoacyl-CoA thiolase 2, peroxisomal (462 aa).

Residues 1-34 (MEKAIERQRVLLEHLRPSSSSSHNYEASLSASAC) constitute a peroxisome transit peptide. Residue C138 is the Acyl-thioester intermediate of the active site. C138 and C192 are disulfide-bonded. Residues H393 and C425 each act as proton acceptor in the active site.

This sequence belongs to the thiolase-like superfamily. Thiolase family. Forms homodimers. As to expression, accumulates in etiolated cotyledons and in seedlings, also present in roots, flowers and siliques (at protein level). High levels in wounded leaves.

It localises to the peroxisome. It is found in the glyoxysome. It catalyses the reaction an acyl-CoA + acetyl-CoA = a 3-oxoacyl-CoA + CoA. It functions in the pathway lipid metabolism; fatty acid metabolism. Involved in long chain fatty-acid beta-oxidation prior to gluconeogenesis during germination and subsequent seedling growth. Confers sensitivity to 2,4-dichlorophenoxybutiric acid (2,4-DB). Required for local and systemic induction of jasmonic acid (JA) biosynthesis after wounding. Seems to be involved in JA biosynthesis during senescence. May be involved in the positive regulation of abscisic acid-activated signaling pathway. This is 3-ketoacyl-CoA thiolase 2, peroxisomal (PED1) from Arabidopsis thaliana (Mouse-ear cress).